We begin with the raw amino-acid sequence, 979 residues long: Mast/stem cell growth factor receptor Kit (979 aa).

A signal peptide spans 1 to 24; it reads MRGARGAWDLLCVLLVLLRGQTAT. At 25-527 the chain is on the extracellular side; the sequence is SQPSASPGEP…QIQAHTLFTP (503 aa). Ig-like C2-type domains lie at 31-117, 126-210, and 217-315; these read PGEP…DPAK, FGKE…AAIK, and VPET…EKGF. Disulfide bonds link Cys58-Cys98, Cys137-Cys187, Cys152-Cys184, and Cys234-Cys293. The N-linked (GlcNAc...) asparagine glycan is linked to Asn146. Asn296, Asn303, Asn323, Asn355, Asn370, Asn466, and Asn489 each carry an N-linked (GlcNAc...) asparagine glycan. Ig-like C2-type domains lie at 324-417 and 420-514; these read TTVF…TKPE and TYDR…FKGN. The cysteines at positions 431 and 494 are disulfide-linked. A helical membrane pass occupies residues 528–548; the sequence is LLIGFVVAAGAMGIIVMVLTY. Over 549–979 the chain is Cytoplasmic; that stretch reads KYLQKPMYEV…TQPLLVHEDA (431 aa). A phosphotyrosine; by autocatalysis mark is found at Tyr550 and Tyr556. Residue Tyr571 participates in Mg(2+) binding. Tyr571 and Tyr573 each carry phosphotyrosine. The interval 571 to 573 is important for interaction with phosphotyrosine-binding proteins; that stretch reads YVY. One can recognise a Protein kinase domain in the interval 592–939; that stretch reads LSFGKTLGAG…ISDSTKHIYS (348 aa). ATP contacts are provided by residues 599 to 606, Lys626, and 674 to 680; these read GAGAFGKV and EYCCYGD. A Phosphotyrosine modification is found at Tyr706. Ser720 carries the phosphoserine modification. A phosphotyrosine; by autocatalysis mark is found at Tyr723 and Tyr732. 2 positions are modified to phosphoserine; by PKC/PRKCA: Ser743 and Ser748. The active-site Proton acceptor is Asp794. Arg798 is a binding site for ATP. Asn799 and Asp812 together coordinate Mg(2+). Ser823 carries the post-translational modification Phosphoserine. Tyr825 is modified (phosphotyrosine; by autocatalysis). A Phosphoserine modification is found at Ser893. Tyr902 is subject to Phosphotyrosine; by autocatalysis. Residue Tyr938 is modified to Phosphotyrosine. At Ser962 the chain carries Phosphoserine.

Belongs to the protein kinase superfamily. Tyr protein kinase family. CSF-1/PDGF receptor subfamily. Monomer in the absence of bound KITLG/SCF. Homodimer in the presence of bound KITLG/SCF, forming a heterotetramer with two KITLG/SCF molecules. Interacts (via phosphorylated tyrosine residues) with the adapter proteins GRB2 and GRB7 (via SH2 domain), and SH2B2/APS. Interacts (via C-terminus) with MPDZ (via the tenth PDZ domain). Interacts (via phosphorylated tyrosine residues) with the protein phosphatases PTPN6/SHP-1 (via SH2 domain), PTPN11/SHP-2 (via SH2 domain) and PTPRU. Interacts with DOK1 and TEC. Interacts with the protein kinase FES/FPS. Interacts with PLCG1. Interacts (via phosphorylated tyrosine residues) with PIK3R1 and PIK3 catalytic subunit. Interacts (KITLG/SCF-bound) with IL1RL1. Interacts with IL1RAP (independent of stimulation with KITLG/SCF). A mast cell-specific KITLG/SCF-induced interleukin-33 signaling complex contains IL1RL1, IL1RAP, KIT and MYD88. Ubiquitinated by SOCS6. KIT is rapidly ubiquitinated after autophosphorylation induced by KITLG/SCF binding, leading to internalization and degradation. In terms of processing, autophosphorylated on tyrosine residues. KITLG/SCF binding promotes autophosphorylation of isoform 1 and isoform 2. Isoform 1 shows low levels of tyrosine phosphorylation in the absence of added KITLG/SCF, while isoform 2 requires stimulation by KITLG/SCF for phosphorylation (in vitro). Phosphorylation of Tyr-573 is required for interaction with PTPN6/SHP-1. Phosphorylation of Tyr-571 is required for interaction with PTPN11/SHP-2. Phosphorylated tyrosine residues are important for interaction with specific binding partners. In terms of tissue distribution, isoform 1 and isoform 2 are detected in bone marrow cells, spermatogonia and spermatocytes, but not in round spermatids, elongating spermatids and spermatozoa. Isoform 3 is detected in round spermatids, elongating spermatids and spermatozoa, but not in spermatogonia and spermatocytes (at protein level). Isoform 1 is widely expressed and detected in fetal liver and bone marrow. Isoform 3 is detected in bone marrow cells enriched in hematopoietic stem cells.

It is found in the cell membrane. Its subcellular location is the cytoplasm. The enzyme catalyses L-tyrosyl-[protein] + ATP = O-phospho-L-tyrosyl-[protein] + ADP + H(+). Its activity is regulated as follows. Present in an inactive conformation in the absence of bound ligand. KITLG/SCF binding leads to dimerization and activation by autophosphorylation. Its function is as follows. Tyrosine-protein kinase that acts as a cell-surface receptor for the cytokine KITLG/SCF and plays an essential role in the regulation of cell survival and proliferation, hematopoiesis, stem cell maintenance, gametogenesis, mast cell development, migration and function, and in melanogenesis. In response to KITLG/SCF binding, KIT can activate several signaling pathways. Phosphorylates PIK3R1, PLCG1, SH2B2/APS and CBL. Activates the AKT1 signaling pathway by phosphorylation of PIK3R1, the regulatory subunit of phosphatidylinositol 3-kinase. Activated KIT also transmits signals via GRB2 and activation of RAS, RAF1 and the MAP kinases MAPK1/ERK2 and/or MAPK3/ERK1. Promotes activation of STAT family members STAT1, STAT3, STAT5A and STAT5B. Activation of PLCG1 leads to the production of the cellular signaling molecules diacylglycerol and inositol 1,4,5-trisphosphate. KIT signaling is modulated by protein phosphatases, and by rapid internalization and degradation of the receptor. Activated KIT promotes phosphorylation of the protein phosphatases PTPN6/SHP-1 and PTPRU, and of the transcription factors STAT1, STAT3, STAT5A and STAT5B. Promotes phosphorylation of PIK3R1, CBL, CRK (isoform Crk-II), LYN, MAPK1/ERK2 and/or MAPK3/ERK1, PLCG1, SRC and SHC1. This is Mast/stem cell growth factor receptor Kit (Kit) from Mus musculus (Mouse).